The primary structure comprises 184 residues: Pyridoxal 5'-phosphate synthase subunit PdxT (184 aa).

46 to 48 (GES) contacts L-glutamine. Cys75 (nucleophile) is an active-site residue. L-glutamine is bound by residues Arg101 and 129–130 (IR). Residues His165 and Glu167 each act as charge relay system in the active site.

Belongs to the glutaminase PdxT/SNO family. In the presence of PdxS, forms a dodecamer of heterodimers. Only shows activity in the heterodimer.

The catalysed reaction is aldehydo-D-ribose 5-phosphate + D-glyceraldehyde 3-phosphate + L-glutamine = pyridoxal 5'-phosphate + L-glutamate + phosphate + 3 H2O + H(+). The enzyme catalyses L-glutamine + H2O = L-glutamate + NH4(+). It functions in the pathway cofactor biosynthesis; pyridoxal 5'-phosphate biosynthesis. Its function is as follows. Catalyzes the hydrolysis of glutamine to glutamate and ammonia as part of the biosynthesis of pyridoxal 5'-phosphate. The resulting ammonia molecule is channeled to the active site of PdxS. The polypeptide is Pyridoxal 5'-phosphate synthase subunit PdxT (Staphylococcus haemolyticus (strain JCSC1435)).